The primary structure comprises 343 residues: E3 ubiquitin-protein ligase RNF113A (343 aa).

N-acetylalanine is present on Ala2. Positions 2-60 (AEQLSPGKTTDQVCTFLFKKPGRKVAAGRRKRPICNQESGDSSSSSDEGNTVVRPEKKR) are important for interaction with SNRNP200/BRR2. Phosphoserine is present on Ser6. The segment covering 23–34 (GRKVAAGRRKRP) has biased composition (basic residues). Residues 23 to 95 (GRKVAAGRRK…EEEEENKSES (73 aa)) form a disordered region. The segment covering 39-50 (ESGDSSSSSDEG) has biased composition (low complexity). Positions 50–61 (GNTVVRPEKKRA) are important for interaction with CXCR4. Ser84 and Ser85 each carry phosphoserine. The C3H1-type zinc finger occupies 196 to 224 (DYQPDICKDYKETGFCGFGDSCKFLHDRS). Ser253 carries the post-translational modification Phosphoserine. An RING-type zinc finger spans residues 262–300 (CFICRQTFQNPVVTKCRHYFCESCALQHFRTTPRCYVCD). Positions 323 to 343 (AEGGGASGFPEDPDEDPVPIT) are disordered. Acidic residues predominate over residues 333–343 (EDPDEDPVPIT).

In terms of assembly, component of pre-catalytic and catalytic spliceosome complexes. Interacts (via N-terminus) with the spliceosome subunit SNRNP200/BRR2. Component of the minor spliceosome. Within this complex, interacts with SCNM1 and CRIPT.

It is found in the nucleus. Its subcellular location is the nucleus speckle. It carries out the reaction S-ubiquitinyl-[E2 ubiquitin-conjugating enzyme]-L-cysteine + [acceptor protein]-L-lysine = [E2 ubiquitin-conjugating enzyme]-L-cysteine + N(6)-ubiquitinyl-[acceptor protein]-L-lysine.. The protein operates within protein modification; protein ubiquitination. In terms of biological role, required for pre-mRNA splicing as component of the spliceosome. As a component of the minor spliceosome, involved in the splicing of U12-type introns in pre-mRNAs. E3 ubiquitin-protein ligase that catalyzes the transfer of ubiquitin onto target proteins. Catalyzes polyubiquitination of SNRNP200/BRR2 with non-canonical 'Lys-63'-linked polyubiquitin chains. Plays a role in DNA repair via its role in the synthesis of 'Lys-63'-linked polyubiquitin chains that recruit ALKBH3 and the ASCC complex to sites of DNA damage by alkylating agents. Ubiquitinates CXCR4, leading to its degradation, and thereby contributes to the termination of CXCR4 signaling. The protein is E3 ubiquitin-protein ligase RNF113A (RNF113A) of Bos taurus (Bovine).